The chain runs to 233 residues: 5'-methylthioadenosine/S-adenosylhomocysteine nucleosidase (233 aa).

Residue glutamate 12 is the Proton acceptor of the active site. Substrate is bound by residues glycine 78, isoleucine 152, and 173–174 (ME). Aspartate 197 (proton donor) is an active-site residue.

Belongs to the PNP/UDP phosphorylase family. MtnN subfamily. Homodimer.

It catalyses the reaction S-adenosyl-L-homocysteine + H2O = S-(5-deoxy-D-ribos-5-yl)-L-homocysteine + adenine. The enzyme catalyses S-methyl-5'-thioadenosine + H2O = 5-(methylsulfanyl)-D-ribose + adenine. It carries out the reaction 5'-deoxyadenosine + H2O = 5-deoxy-D-ribose + adenine. It participates in amino-acid biosynthesis; L-methionine biosynthesis via salvage pathway; S-methyl-5-thio-alpha-D-ribose 1-phosphate from S-methyl-5'-thioadenosine (hydrolase route): step 1/2. Functionally, catalyzes the irreversible cleavage of the glycosidic bond in both 5'-methylthioadenosine (MTA) and S-adenosylhomocysteine (SAH/AdoHcy) to adenine and the corresponding thioribose, 5'-methylthioribose and S-ribosylhomocysteine, respectively. Also cleaves 5'-deoxyadenosine, a toxic by-product of radical S-adenosylmethionine (SAM) enzymes, into 5-deoxyribose and adenine. Thus, is required for in vivo function of the radical SAM enzymes biotin synthase and lipoic acid synthase, that are inhibited by 5'-deoxyadenosine accumulation. This Sodalis glossinidius (strain morsitans) protein is 5'-methylthioadenosine/S-adenosylhomocysteine nucleosidase.